A 69-amino-acid chain; its full sequence is Large ribosomal subunit protein bL31 (69 aa).

Positions 16, 18, 36, and 39 each coordinate Zn(2+).

Belongs to the bacterial ribosomal protein bL31 family. Type A subfamily. As to quaternary structure, part of the 50S ribosomal subunit. Zn(2+) is required as a cofactor.

Functionally, binds the 23S rRNA. This Ruminiclostridium cellulolyticum (strain ATCC 35319 / DSM 5812 / JCM 6584 / H10) (Clostridium cellulolyticum) protein is Large ribosomal subunit protein bL31.